The sequence spans 452 residues: Flavin-containing monooxygenase FMO GS-OX-like 4 (452 aa).

Residue 17–22 (GAGAAG) coordinates FAD. An NADP(+)-binding site is contributed by 217–222 (GNSASA).

This sequence belongs to the FMO family. Requires FAD as cofactor.

Functionally, catalyzes the conversion of methylthioalkyl glucosinolates of any chain length into methylsulfinylalkyl glucosinolates. The polypeptide is Flavin-containing monooxygenase FMO GS-OX-like 4 (Arabidopsis thaliana (Mouse-ear cress)).